Consider the following 409-residue polypeptide: 4-hydroxy-3-methylbut-2-en-1-yl diphosphate synthase (ferredoxin) (409 aa).

The segment covering 1–12 has biased composition (polar residues); that stretch reads MQTLDRPNAPTQ. The interval 1–22 is disordered; that stretch reads MQTLDRPNAPTQQPYPEPVYPR. Residues C314, C317, C348, and E355 each contribute to the [4Fe-4S] cluster site.

The protein belongs to the IspG family. [4Fe-4S] cluster serves as cofactor.

The enzyme catalyses (2E)-4-hydroxy-3-methylbut-2-enyl diphosphate + 2 oxidized [2Fe-2S]-[ferredoxin] + H2O = 2-C-methyl-D-erythritol 2,4-cyclic diphosphate + 2 reduced [2Fe-2S]-[ferredoxin] + H(+). The protein operates within isoprenoid biosynthesis; isopentenyl diphosphate biosynthesis via DXP pathway; isopentenyl diphosphate from 1-deoxy-D-xylulose 5-phosphate: step 5/6. Converts 2C-methyl-D-erythritol 2,4-cyclodiphosphate (ME-2,4cPP) into 1-hydroxy-2-methyl-2-(E)-butenyl 4-diphosphate. The protein is 4-hydroxy-3-methylbut-2-en-1-yl diphosphate synthase (ferredoxin) of Synechococcus sp. (strain JA-2-3B'a(2-13)) (Cyanobacteria bacterium Yellowstone B-Prime).